The following is a 157-amino-acid chain: Transcriptional regulator MraZ (157 aa).

2 SpoVT-AbrB domains span residues 7–52 and 83–126; these read TYTM…AGGN and SETL…EPER.

It belongs to the MraZ family. As to quaternary structure, forms oligomers.

Its subcellular location is the cytoplasm. It localises to the nucleoid. In Xanthobacter autotrophicus (strain ATCC BAA-1158 / Py2), this protein is Transcriptional regulator MraZ.